Here is a 375-residue protein sequence, read N- to C-terminus: Leucoanthocyanidin dioxygenase 1 (375 aa).

The 100-residue stretch at 218–317 (LLLQLKINYY…RLSWVVFCEP (100 aa)) folds into the Fe2OG dioxygenase domain. The Fe cation site is built by H242, D244, and H298. Residue R308 participates in 2-oxoglutarate binding.

The protein belongs to the iron/ascorbate-dependent oxidoreductase family. L-ascorbate is required as a cofactor. The cofactor is Fe(2+).

It carries out the reaction a (2R,3S,4S)-leucoanthocyanidin + 2-oxoglutarate + O2 = a 4-H-anthocyanidin with a 3-hydroxy group + succinate + CO2 + 2 H2O. Its pathway is pigment biosynthesis; anthocyanin biosynthesis. Functionally, involved in anthocyanin and protoanthocyanidin biosynthesis by catalyzing the oxidation of leucoanthocyanidins into anthocyanidins. Is able to synthesize anthocyanin pigments from leucoanthocyanidins in aleurone tissue. Converts dihydroquercetin to quercetin in vitro. This Oryza sativa subsp. indica (Rice) protein is Leucoanthocyanidin dioxygenase 1.